The chain runs to 305 residues: Mas-related G-protein coupled receptor member A7 (305 aa).

Residues 1–17 lie on the Extracellular side of the membrane; that stretch reads MDETSPRSIDIESLIPN. Residues 18 to 38 form a helical membrane-spanning segment; the sequence is LMIIIFGLVGLTGNAIVLWLL. Residues 39–46 are Cytoplasmic-facing; that stretch reads GFCLHRNA. A helical membrane pass occupies residues 47–67; the sequence is FLVYILNLALADFLFLLCHFI. Topologically, residues 68-81 are extracellular; it reads NSAMFLLKVPIPNG. Residues 82-102 traverse the membrane as a helical segment; sequence IFVYCFYTIKMVLYITGLSML. Topologically, residues 103-129 are cytoplasmic; the sequence is SAISTERCLSVLCPIWYHCRRPEHTST. A helical membrane pass occupies residues 130-150; the sequence is VMCAVIWIFSVLICILKEYFC. Residues 151–167 lie on the Extracellular side of the membrane; sequence DFFGTKLGNYYVCQASN. A helical transmembrane segment spans residues 168 to 188; the sequence is FFMGAYLMFLFVVLCLSTLAL. At 189 to 211 the chain is on the cytoplasmic side; sequence LARLFCGAEKMKFTRLFVTIMLT. Residues 212 to 232 traverse the membrane as a helical segment; sequence ILVFLLCGLPWGFFWFLLIWI. Residues 233-244 are Extracellular-facing; it reads KGGFSVLDYRLY. Residues 245–265 form a helical membrane-spanning segment; it reads LASIVLTVVNSCANPIIYFFV. At 266 to 305 the chain is on the cytoplasmic side; it reads GSFRHRLKHQTLKMVLQSALQDTPETHENMVEMSRIKAEQ.

Belongs to the G-protein coupled receptor 1 family. Mas subfamily. In terms of tissue distribution, expressed in a subset of sensory neurons that includes nociceptors. Expressed in the subclass of non-peptidergic sensory neurons that are IB4(+) and VR1(-).

It is found in the cell membrane. In terms of biological role, orphan receptor. May be a receptor for RFamide-family neuropeptides such as NPFF and NPAF, which are analgesic in vivo. May regulate nociceptor function and/or development, including the sensation or modulation of pain. In Mus musculus (Mouse), this protein is Mas-related G-protein coupled receptor member A7 (Mrgpra7).